We begin with the raw amino-acid sequence, 821 residues long: MKTIKSLFLLSLLIVNLLISSTYGSSIRVSIVGGEEAEVIEKPRTFGNKRELKLEYSQIYPKKQLNQENINFMSARDTFVDNLMSKMSITEKIGQMTQLDITTLTSPNTITINETTLAYYAKTYYIGSYLNSPVSGGLAGDIHHINSSVWLDMINTIQTIVIEGSPNKIPMIYGLDSVHGANYVHKATLFPHNTGLAATFNIEHATTAAQITSKDTVAVGIPWVFAPVLGIGVQPLWSRIYETFGEDPYVASMMGAAAVRGFQGGNNSFDGPINAPSAVCTAKHYFGYSDPTSGKDRTAAWIPERMLRRYFLPSFAEAITGAGAGTIMINSGEVNGVPMHTSYKYLTEVLRGELQFEGVAVTDWQDIEKLVYFHHTAGSAEEAILQALDAGIDMSMVPLDLSFPIILAEMVAAGTVPESRLDLSVRRILNLKYALGLFSNPYPNPNAAIVDTIGQVQDREAAAATAEESITLLQNKNNILPLNTNTIKNVLLTGPSADSIRNLNGGWSVHWQGAYEDSEFPFGTSILTGLREITNDTADFNIQYTIGHEIGVPTNQTSIDEAVELAQSSDVVVVVIGELPEAETPGDIYDLSMDPNEVLLLQQLVDTGKPVVLILVEARPRILPPDLVYSCAAVLMAYLPGSEGGKPIANILMGNVNPSGRLPLTYPGTTGDIGVPYYHKYSENGVTTPLFQFGDGLSYTTFNYTNLACSNCKPISGQSGNYTGVLGQSYTFTVTVTNNGNVQGKDSVLLYLSDLWAQVTPEVKMLRGFQKVDLMPAKSQQISFTLNAYEFSFIGVDNKITLESGQFIIMVGNQQLGLYLQ.

An N-terminal signal peptide occupies residues 1-24 (MKTIKSLFLLSLLIVNLLISSTYG). Positions 25-69 (SSIRVSIVGGEEAEVIEKPRTFGNKRELKLEYSQIYPKKQLNQEN) are excised as a propeptide. 3 N-linked (GlcNAc...) asparagine glycosylation sites follow: asparagine 113, asparagine 146, and asparagine 266. The active site involves aspartate 363. N-linked (GlcNAc...) asparagine glycans are attached at residues asparagine 535, asparagine 555, asparagine 703, and asparagine 721.

The protein belongs to the glycosyl hydrolase 3 family. Post-translationally, glycosylated. The polyoligosaccharides are of the high-mannose type and are highly substituted with both phosphate and sulfate moieties.

The protein localises to the lysosome. The catalysed reaction is Hydrolysis of terminal, non-reducing beta-D-glucosyl residues with release of beta-D-glucose.. The sequence is that of Lysosomal beta glucosidase (gluA) from Dictyostelium discoideum (Social amoeba).